A 132-amino-acid polypeptide reads, in one-letter code: Small ribosomal subunit protein uS8 (132 aa).

This sequence belongs to the universal ribosomal protein uS8 family. As to quaternary structure, part of the 30S ribosomal subunit. Contacts proteins S5 and S12.

Its function is as follows. One of the primary rRNA binding proteins, it binds directly to 16S rRNA central domain where it helps coordinate assembly of the platform of the 30S subunit. The sequence is that of Small ribosomal subunit protein uS8 from Xanthomonas euvesicatoria pv. vesicatoria (strain 85-10) (Xanthomonas campestris pv. vesicatoria).